The primary structure comprises 109 residues: Guanylin (109 aa).

An N-terminal signal peptide occupies residues M1–G21. The propeptide occupies V22 to D94. Cystine bridges form between C63/C76, C98/C106, and C101/C109.

It belongs to the guanylin family.

It is found in the secreted. Its function is as follows. Endogenous activator of intestinal guanylate cyclase. It stimulates this enzyme through the same receptor binding region as the heat-stable enterotoxins. This Sus scrofa (Pig) protein is Guanylin (GUCA2A).